The following is a 405-amino-acid chain: uncharacterized protein (405 aa).

12 helical membrane-spanning segments follow: residues 19-39, 47-67, 85-105, 129-149, 157-177, 178-198, 224-244, 252-272, 283-303, 309-329, 344-364, and 366-386; these read ILSI…PLAV, VMGF…FATL, IVVF…TAGL, SFAG…LHIG, IVTY…YHWG, GLQA…LLAI, GMAL…ITLF, GAAF…LLFP, VAMI…VATM, IGVL…GVVA, TYTV…GLVM, and WAGV…ALLL.

This sequence belongs to the major facilitator superfamily. YhhS family.

Its subcellular location is the cell inner membrane. This is an uncharacterized protein from Escherichia coli O157:H7.